Here is a 109-residue protein sequence, read N- to C-terminus: Putative double-stranded DNA mimic protein YciU (109 aa).

The protein belongs to the putative dsDNA mimic protein family.

May act as a double-stranded DNA (dsDNA) mimic. Probably regulates the activity of a dsDNA-binding protein. The sequence is that of Putative double-stranded DNA mimic protein YciU from Salmonella choleraesuis (strain SC-B67).